A 402-amino-acid chain; its full sequence is Dynactin subunit 2 (402 aa).

Residues 1–26 form a disordered region; the sequence is MADPKYADLPGIARNEPDVYETSDLP. Coiled-coil stretches lie at residues 101–132 and 357–402; these read PQQR…SAAE and VHLD…KRLQ.

This sequence belongs to the dynactin subunit 2 family. Subunit of dynactin, a multiprotein complex part of a tripartite complex with dynein and a adapter, such as BICDL1, BICD2 or HOOK3. The dynactin complex is built around ACTR1A/ACTB filament and consists of an actin-related filament composed of a shoulder domain, a pointed end and a barbed end. Its length is defined by its flexible shoulder domain. The soulder is composed of 2 DCTN1 subunits, 4 DCTN2 and 2 DCTN3.

It localises to the cytoplasm. Its subcellular location is the cytoskeleton. The protein resides in the microtubule organizing center. It is found in the centrosome. The protein localises to the membrane. Functionally, part of the dynactin complex that activates the molecular motor dynein for ultra-processive transport along microtubules. In the dynactin soulder domain, binds the ACTR1A filament and acts as a molecular ruler to determine the length. Modulates cytoplasmic dynein binding to an organelle, and plays a role in prometaphase chromosome alignment and spindle organization during mitosis. Involved in anchoring microtubules to centrosomes. In Gallus gallus (Chicken), this protein is Dynactin subunit 2 (DCTN2).